The chain runs to 325 residues: Fructose-1,6-bisphosphatase class 1 (325 aa).

The Mg(2+) site is built by Glu-84, Asp-103, Leu-105, and Asp-106. Substrate contacts are provided by residues 106–109 (DGSS), Asn-196, and Lys-262. Glu-268 lines the Mg(2+) pocket.

It belongs to the FBPase class 1 family. As to quaternary structure, homotetramer. Mg(2+) serves as cofactor.

Its subcellular location is the cytoplasm. The catalysed reaction is beta-D-fructose 1,6-bisphosphate + H2O = beta-D-fructose 6-phosphate + phosphate. It functions in the pathway carbohydrate biosynthesis; gluconeogenesis. The protein is Fructose-1,6-bisphosphatase class 1 of Shewanella baltica (strain OS195).